A 99-amino-acid chain; its full sequence is uncharacterized protein (99 aa).

This is an uncharacterized protein from Methanocaldococcus jannaschii (strain ATCC 43067 / DSM 2661 / JAL-1 / JCM 10045 / NBRC 100440) (Methanococcus jannaschii).